The following is a 501-amino-acid chain: MVTMKLLYLTSFASLAVANGPGWDWKPRVHPKVLPQMIHLWDLLQGAQQLEDFAYAYPERNRVFGGRAHEDTVNYLYRELKKTGYYDVYKQPQVHQWTRADQALTVDGQSYDATTMTYSPSVNATAPLAVVNNLGCVEADYPADLTGKIALISRGECTFATKSVLSAKAGAAAALVYNNIEGSMAGTLGGATSELGAYAPIAGISLADGQALIQMIQAGTVTANLWIDSQVENRTTYNVIAQTKGGDPNNVVALGGHTDSVEAGPGINDDGSGIISNLVVAKALTRFSVKNAVRFCFWTAEEFGLLGSNYYVNSLNATEQAKIRLYLNFDMIASPNYALMIYDGDGSAFNLTGPAGSAQIERLFEDYYTSIRKPFVPTEFNGRSDYQAFILNGIPAGGLFTGAEAIKTEEQAQLFGGQAGVALDANYHAKGDNMTNLNREAFLINSRATAFAVATYANSLDSIPPRNMTTVVKRSQLEQAMKRTPHTHTGGTGCYKDRVEQ.

The N-terminal stretch at 1–18 (MVTMKLLYLTSFASLAVA) is a signal peptide. The PA domain occupies 119–216 (SPSVNATAPL…ADGQALIQMI (98 aa)). Asn-123 and Asn-233 each carry an N-linked (GlcNAc...) asparagine glycan. Residues His-257 and Asp-269 each contribute to the Zn(2+) site. Glu-301 functions as the Proton acceptor in the catalytic mechanism. Residue Glu-302 coordinates Zn(2+). Asn-316 carries an N-linked (GlcNAc...) asparagine glycan. A Zn(2+)-binding site is contributed by Asp-330. Asn-350 carries N-linked (GlcNAc...) asparagine glycosylation. His-428 serves as a coordination point for Zn(2+). Asn-433 and Asn-467 each carry an N-linked (GlcNAc...) asparagine glycan. Positions 480–501 (AMKRTPHTHTGGTGCYKDRVEQ) are disordered.

The protein belongs to the peptidase M28 family. M28A subfamily. As to quaternary structure, monomer. Requires Zn(2+) as cofactor.

It is found in the secreted. Extracellular aminopeptidase that releases a wide variety of amino acids from natural peptides and contributes to pathogenicity. The sequence is that of Probable leucine aminopeptidase 2 (lap2) from Aspergillus fumigatus (strain ATCC MYA-4609 / CBS 101355 / FGSC A1100 / Af293) (Neosartorya fumigata).